A 317-amino-acid chain; its full sequence is Transaldolase (317 aa).

Catalysis depends on Lys126, which acts as the Schiff-base intermediate with substrate.

This sequence belongs to the transaldolase family. Type 1 subfamily. Homodimer.

It is found in the cytoplasm. The catalysed reaction is D-sedoheptulose 7-phosphate + D-glyceraldehyde 3-phosphate = D-erythrose 4-phosphate + beta-D-fructose 6-phosphate. It functions in the pathway carbohydrate degradation; pentose phosphate pathway; D-glyceraldehyde 3-phosphate and beta-D-fructose 6-phosphate from D-ribose 5-phosphate and D-xylulose 5-phosphate (non-oxidative stage): step 2/3. Functionally, transaldolase is important for the balance of metabolites in the pentose-phosphate pathway. The protein is Transaldolase of Burkholderia lata (strain ATCC 17760 / DSM 23089 / LMG 22485 / NCIMB 9086 / R18194 / 383).